The sequence spans 465 residues: MDDTTSAAPEPDRLRLLRVLGPAHVWALGVGIVLVGEYMGWNFSVGKGGMIAGLMACWVAGLLYTCVAMIDSEVTSTVAAAGGQYAQAKHIVGPLMAFNVGLFLVMAYTMLEAANAITVGFLLDTVAGMQGQTGLNQQPFIVLAIMFLAWLNYRGVLATLTFNLVITAIAFLAIVALFVSVQFGASAVPLDFSAITSDPLPYGWVGIVASLHFGLWYYLGIEGTCQAAEEVRSPARSLPYGTMAGIMTLLIAATMTWYICSGLMPWEYLGQAGTPLFDAARVTGSTGLMVLLFVGTAFATLASANGCINDASRAWFSMSRDRYLPSWFGAVHPVYRTPYRAIVFLVPIALIFALGAPLDQVVTFSILSGLLGYTFMTFNMVMFRNKWPLGRIKRGYVHPFHPLPTVVLLILCSTAYFAVFLGYGTQLSAMMCFYIVASLWFHFRRYKFVRRGDQFTMPWPKPHGY.

11 helical membrane-spanning segments follow: residues 19 to 39 (VLGPAHVWALGVGIVLVGEYM), 50 to 70 (MIAGLMACWVAGLLYTCVAMI), 91 to 111 (IVGPLMAFNVGLFLVMAYTML), 140 to 160 (FIVLAIMFLAWLNYRGVLATL), 164 to 184 (LVITAIAFLAIVALFVSVQFG), 201 to 221 (PYGWVGIVASLHFGLWYYLGI), 244 to 264 (AGIMTLLIAATMTWYICSGLM), 288 to 308 (LMVLLFVGTAFATLASANGCI), 342 to 362 (IVFLVPIALIFALGAPLDQVV), 363 to 383 (TFSILSGLLGYTFMTFNMVMF), and 403 to 423 (LPTVVLLILCSTAYFAVFLGY).

Belongs to the amino acid-polyamine-organocation (APC) superfamily.

The protein localises to the cell membrane. Probable amino-acid or metabolite transport protein. This is an uncharacterized protein from Rhizobium meliloti (strain 1021) (Ensifer meliloti).